A 445-amino-acid chain; its full sequence is Phosphoglucosamine mutase (445 aa).

The active-site Phosphoserine intermediate is the Ser102. Mg(2+) is bound by residues Ser102, Asp241, Asp243, and Asp245. Ser102 carries the post-translational modification Phosphoserine.

This sequence belongs to the phosphohexose mutase family. The cofactor is Mg(2+). Activated by phosphorylation.

The catalysed reaction is alpha-D-glucosamine 1-phosphate = D-glucosamine 6-phosphate. Its function is as follows. Catalyzes the conversion of glucosamine-6-phosphate to glucosamine-1-phosphate. In Salmonella choleraesuis (strain SC-B67), this protein is Phosphoglucosamine mutase.